The chain runs to 74 residues: MRADIHPKYEKLVATCSCGNVIETRSALGKETIYLDVCSACHPFYTGKQKNVDTGGRIDKFKQRFAGMSRSIKR.

Cys-16, Cys-18, Cys-38, and Cys-41 together coordinate Zn(2+).

It belongs to the bacterial ribosomal protein bL31 family. Type A subfamily. In terms of assembly, part of the 50S ribosomal subunit. Zn(2+) is required as a cofactor.

Binds the 23S rRNA. This chain is Large ribosomal subunit protein bL31, found in Acinetobacter baumannii (strain AB307-0294).